A 103-amino-acid polypeptide reads, in one-letter code: N(4)-acetylcytidine amidohydrolase (103 aa).

The ASCH domain occupies 6 to 101 (ITFFQRFQDD…QTQFYVIEFK (96 aa)). Lys-21 functions as the Proton acceptor in the catalytic mechanism. The Nucleophile role is filled by Thr-24. Glu-74 acts as the Proton donor in catalysis.

This sequence belongs to the N(4)-acetylcytidine amidohydrolase family.

The enzyme catalyses N(4)-acetylcytidine + H2O = cytidine + acetate + H(+). It carries out the reaction N(4)-acetyl-2'-deoxycytidine + H2O = 2'-deoxycytidine + acetate + H(+). It catalyses the reaction N(4)-acetylcytosine + H2O = cytosine + acetate + H(+). Catalyzes the hydrolysis of N(4)-acetylcytidine (ac4C). The polypeptide is N(4)-acetylcytidine amidohydrolase (yqfB) (Escherichia coli O8 (strain IAI1)).